A 169-amino-acid polypeptide reads, in one-letter code: Cell division inhibitor SulA (169 aa).

The ftsZ binding stretch occupies residues 106 to 112 (ALRTGNY). The segment at 162 to 169 (KIHSNLYH) is lon protease binding.

The protein belongs to the SulA family. As to quaternary structure, interacts with FtsZ. Post-translationally, is rapidly cleaved and degraded by the Lon protease once DNA damage is repaired.

In terms of biological role, component of the SOS system and an inhibitor of cell division. Accumulation of SulA causes rapid cessation of cell division and the appearance of long, non-septate filaments. In the presence of GTP, binds a polymerization-competent form of FtsZ in a 1:1 ratio, thus inhibiting FtsZ polymerization and therefore preventing it from participating in the assembly of the Z ring. This mechanism prevents the premature segregation of damaged DNA to daughter cells during cell division. In Escherichia coli O81 (strain ED1a), this protein is Cell division inhibitor SulA.